The primary structure comprises 238 residues: MTRLSVNINKIATIRNARGGNNPDLLKVALDCERFGAEGITIHPRPDERHIRYQDAYDLKKIVTTEFNIEGNPEGEFIALVENIKPDQVTLVPDAVNAITSNAGWDTITHQSFLTEIISNFKKAGIRVSVFVDPVTAMVEGAAKAGADRVELYTEPYATSFHSNKEAAIKEYIEAAAAAKSLGLGINAGHDLDLFNLNYLKKNIPFLDEVSIGHALICDALYYGLENTIQLYLRELKK.

3-amino-2-oxopropyl phosphate contacts are provided by asparagine 7 and arginine 18. Catalysis depends on histidine 43, which acts as the Proton acceptor. Positions 45 and 50 each coordinate 1-deoxy-D-xylulose 5-phosphate. Glutamate 70 functions as the Proton acceptor in the catalytic mechanism. Threonine 100 lines the 1-deoxy-D-xylulose 5-phosphate pocket. Histidine 190 acts as the Proton donor in catalysis. 3-amino-2-oxopropyl phosphate-binding positions include aspartate 191 and 213–214 (GH).

This sequence belongs to the PNP synthase family. Homooctamer; tetramer of dimers.

The protein resides in the cytoplasm. It catalyses the reaction 3-amino-2-oxopropyl phosphate + 1-deoxy-D-xylulose 5-phosphate = pyridoxine 5'-phosphate + phosphate + 2 H2O + H(+). It functions in the pathway cofactor biosynthesis; pyridoxine 5'-phosphate biosynthesis; pyridoxine 5'-phosphate from D-erythrose 4-phosphate: step 5/5. In terms of biological role, catalyzes the complicated ring closure reaction between the two acyclic compounds 1-deoxy-D-xylulose-5-phosphate (DXP) and 3-amino-2-oxopropyl phosphate (1-amino-acetone-3-phosphate or AAP) to form pyridoxine 5'-phosphate (PNP) and inorganic phosphate. The polypeptide is Pyridoxine 5'-phosphate synthase (Cytophaga hutchinsonii (strain ATCC 33406 / DSM 1761 / CIP 103989 / NBRC 15051 / NCIMB 9469 / D465)).